The sequence spans 590 residues: Vesicular glutamate transporter 3 (590 aa).

Residues 1–76 (MPLGGFAGLK…CGCFGLPKRY (76 aa)) lie on the Cytoplasmic side of the membrane. The helical transmembrane segment at 77 to 97 (IIAMLSGLGFCISFGIRCNLG) threads the bilayer. Topologically, residues 98-130 (VAIVEMVNNNTVYINGTAVMQPAQFNWDPETVG) are vesicular. N-linked (GlcNAc...) asparagine glycans are attached at residues Asn-106 and Asn-112. The chain crosses the membrane as a helical span at residues 131 to 151 (LIHGSFFWGYIVTQIPGGFIS). The Cytoplasmic segment spans residues 152–153 (NK). Residues 154–174 (LAANRVFGAAIFLTSVLNMFI) traverse the membrane as a helical segment. Over 175–182 (PSAARVHY) the chain is Vesicular. The helical transmembrane segment at 183–203 (GCVMFVRILQGLVEGVTYPAC) threads the bilayer. The Cytoplasmic segment spans residues 204–221 (HGMWSKWAPPLERSRLAT). Residues 222–242 (TSFCGSYAGAVIAMPLAGILV) form a helical membrane-spanning segment. Topologically, residues 243–249 (QYVGWPS) are vesicular. A helical membrane pass occupies residues 250–270 (VFYIYGVFGIIWYIFWILLAY). At 271-315 (NSPAVHPTISEEERNYIETSIGEGANLMSSTEKFKTPWREFFTSM) the chain is on the cytoplasmic side. The helical transmembrane segment at 316-336 (PVYAIIVANFCRSWTFYLLLI) threads the bilayer. Over 337-354 (SQPAYFEEVFGFPISKVG) the chain is Vesicular. Residues 355–375 (ILSAVPHMVMTIIVPIGGQLA) form a helical membrane-spanning segment. Over 376 to 391 (DFLRSRKILSTTTVRK) the chain is Cytoplasmic. Residues 392 to 412 (IMNCGGFGMEATLLLVVGFSH) traverse the membrane as a helical segment. Over 413 to 414 (TR) the chain is Vesicular. Residues 415 to 435 (AVAISFLILAVGFSGFAISGF) traverse the membrane as a helical segment. The Cytoplasmic portion of the chain corresponds to 436–448 (NVNHLDIAPRYAS). A helical membrane pass occupies residues 449–469 (ILMGISNGVGTLSGMVCPLIV). Over 470–482 (GALTKHKTRLEWQ) the chain is Vesicular. The helical transmembrane segment at 483–503 (HVFVIASMVHYTGVIFYAIFA) threads the bilayer. Topologically, residues 504–587 (SGEKQDWADP…NHYENGEYQT (84 aa)) are cytoplasmic. Residues 526–535 (EDELADETEP) are compositionally biased toward acidic residues. The interval 526-590 (EDELADETEP…ENGEYQTQYQ (65 aa)) is disordered. Residues 536 to 557 (SSDSGLATRQKTYGTTDNSSGR) show a composition bias toward polar residues.

This sequence belongs to the major facilitator superfamily. Sodium/anion cotransporter family. VGLUT subfamily.

It localises to the cytoplasmic vesicle. It is found in the secretory vesicle. The protein resides in the synaptic vesicle membrane. The protein localises to the cell membrane. Its subcellular location is the synapse. It localises to the synaptosome. It catalyses the reaction L-glutamate(out) = L-glutamate(in). The catalysed reaction is 3 Na(+)(out) + phosphate(out) = 3 Na(+)(in) + phosphate(in). The enzyme catalyses chloride(in) = chloride(out). Its activity is regulated as follows. The L-glutamate uniporter activity exhibits a biphasic dependence on chloride concentration. Chloride channel activity is allosterically activated by lumenal H(+) and Cl(-) leading to synaptic vesicles acidification. The glutamate transport activity is allosterically activated by lumenal H(+) and Cl(-), preventing non-vesicular L-glutamate release. Functionally, multifunctional transporter that transports L-glutamate as well as multiple ions such as chloride, sodium and phosphate. At the synaptic vesicle membrane, mainly functions as an uniporter that mediates the uptake of L-glutamate into synaptic vesicles at presynaptic nerve terminals of excitatory neural cells. The L-glutamate uniporter activity is electrogenic and is driven by the proton electrochemical gradient, mainly by the electrical gradient established by the vacuolar H(+)-ATPase across the synaptic vesicle membrane. In addition, functions as a chloride channel that allows a chloride permeation through the synaptic vesicle membrane that affects the proton electrochemical gradient and promotes synaptic vesicles acidification. At the plasma membrane, following exocytosis, functions as a symporter of Na(+) and phosphate from the extracellular space to the cytoplasm allowing synaptic phosphate homeostasis regulation. The symporter activity is electrogenic. Moreover, operates synergistically with SLC18A3/VACHT under a constant H(+) gradient, thereby allowing striatal vesicular acetylcholine uptake. The sequence is that of Vesicular glutamate transporter 3 from Danio rerio (Zebrafish).